Reading from the N-terminus, the 1198-residue chain is Spindle-defective protein 5 (1198 aa).

A compositionally biased stretch (polar residues) spans 1 to 10; it reads MEDNSVLNED. Positions 1-45 are disordered; sequence MEDNSVLNEDSNLEHVEGQPRRSMSQPVLNVEGDKRTSSTSATQQ. 5 coiled-coil regions span residues 67–381, 566–603, 694–916, 983–1035, and 1127–1175; these read EENK…QLTG, HDVA…FEEI, KFTS…LSTS, DELC…ENVP, and KNET…EFQD.

It localises to the cytoplasm. Its subcellular location is the cytoskeleton. It is found in the microtubule organizing center. The protein resides in the centrosome. Its function is as follows. Plays a central role in centrosome maturation and mitotic spindle assembly during the first division of the zygote. Required for the centrosomal localization of air-1 and zyg-9. Probably not required in late embryogenesis and during larval development. This chain is Spindle-defective protein 5 (spd-5), found in Caenorhabditis elegans.